Here is a 219-residue protein sequence, read N- to C-terminus: Thiamine-phosphate synthase (219 aa).

Residues 44–48 and N79 contribute to the 4-amino-2-methyl-5-(diphosphooxymethyl)pyrimidine site; that span reads QFREK. Mg(2+) contacts are provided by D80 and D99. Residue S117 coordinates 4-amino-2-methyl-5-(diphosphooxymethyl)pyrimidine. 143-145 contacts 2-[(2R,5Z)-2-carboxy-4-methylthiazol-5(2H)-ylidene]ethyl phosphate; sequence TST. 4-amino-2-methyl-5-(diphosphooxymethyl)pyrimidine is bound at residue K146. Residues G175 and 195–196 contribute to the 2-[(2R,5Z)-2-carboxy-4-methylthiazol-5(2H)-ylidene]ethyl phosphate site; that span reads IS.

The protein belongs to the thiamine-phosphate synthase family. Mg(2+) serves as cofactor.

It catalyses the reaction 2-[(2R,5Z)-2-carboxy-4-methylthiazol-5(2H)-ylidene]ethyl phosphate + 4-amino-2-methyl-5-(diphosphooxymethyl)pyrimidine + 2 H(+) = thiamine phosphate + CO2 + diphosphate. The enzyme catalyses 2-(2-carboxy-4-methylthiazol-5-yl)ethyl phosphate + 4-amino-2-methyl-5-(diphosphooxymethyl)pyrimidine + 2 H(+) = thiamine phosphate + CO2 + diphosphate. It carries out the reaction 4-methyl-5-(2-phosphooxyethyl)-thiazole + 4-amino-2-methyl-5-(diphosphooxymethyl)pyrimidine + H(+) = thiamine phosphate + diphosphate. The protein operates within cofactor biosynthesis; thiamine diphosphate biosynthesis; thiamine phosphate from 4-amino-2-methyl-5-diphosphomethylpyrimidine and 4-methyl-5-(2-phosphoethyl)-thiazole: step 1/1. Functionally, condenses 4-methyl-5-(beta-hydroxyethyl)thiazole monophosphate (THZ-P) and 2-methyl-4-amino-5-hydroxymethyl pyrimidine pyrophosphate (HMP-PP) to form thiamine monophosphate (TMP). In Bacillus anthracis (strain A0248), this protein is Thiamine-phosphate synthase.